Consider the following 60-residue polypeptide: Prophage outer membrane lipoprotein RzoD (60 aa).

A signal peptide spans 1–19 (MRKLKMMLCVMMLPLVVVG). The N-palmitoyl cysteine moiety is linked to residue cysteine 20. A lipid anchor (S-diacylglycerol cysteine) is attached at cysteine 20.

Belongs to the lambdalikevirus o-spanin family. As to quaternary structure, homodimer; disulfide-linked. Interacts (via C-terminus) with RZ (via C-terminus). Part of the spanin complex which spans the entire periplasmic space. The spanin complex is composed of spanin, inner membrane subunit and spanin, outer membrane subunit.

It is found in the cell outer membrane. Its function is as follows. Component of the spanin complex that disrupts the outer membrane and causes cell lysis during virus exit. The spanin complex conducts the final step in cell lysis by disrupting the outer membrane after holin and endolysin action have permeabilized the inner membrane and degraded the host peptidoglycans. This Escherichia coli (strain K12) protein is Prophage outer membrane lipoprotein RzoD (rzoD).